The primary structure comprises 469 residues: Flap endonuclease 1-B (469 aa).

The N-domain stretch occupies residues methionine 1 to arginine 103. Aspartate 32 provides a ligand contact to Mg(2+). Arginine 45 and arginine 69 together coordinate DNA. Residues aspartate 85, glutamate 157, glutamate 159, aspartate 183, and aspartate 185 each contribute to the Mg(2+) site. The I-domain stretch occupies residues aspartate 121–tyrosine 257. Glutamate 157 contributes to the DNA binding site. Residues glycine 235 and aspartate 237 each coordinate DNA. Residue aspartate 237 participates in Mg(2+) binding. Positions glutamine 274 to proline 354 are disordered. Acidic residues-rich tracts occupy residues glutamate 282 to proline 295 and glutamate 302 to alanine 317. The span at proline 326–lysine 342 shows a compositional bias: basic residues. The interval glutamine 412–phenylalanine 420 is interaction with PCNA. Positions proline 424–lysine 469 are disordered. Positions glycine 441–glutamate 459 are enriched in basic and acidic residues.

It belongs to the XPG/RAD2 endonuclease family. FEN1 subfamily. Interacts with PCNA. Three molecules of FEN1 bind to one PCNA trimer with each molecule binding to one PCNA monomer. PCNA stimulates the nuclease activity without altering cleavage specificity. Requires Mg(2+) as cofactor. Phosphorylated. Phosphorylation upon DNA damage induces relocalization to the nuclear plasma.

It localises to the nucleus. Its subcellular location is the nucleolus. The protein localises to the nucleoplasm. It is found in the mitochondrion. Functionally, structure-specific nuclease with 5'-flap endonuclease and 5'-3' exonuclease activities involved in DNA replication and repair. During DNA replication, cleaves the 5'-overhanging flap structure that is generated by displacement synthesis when DNA polymerase encounters the 5'-end of a downstream Okazaki fragment. It enters the flap from the 5'-end and then tracks to cleave the flap base, leaving a nick for ligation. Also involved in the long patch base excision repair (LP-BER) pathway, by cleaving within the apurinic/apyrimidinic (AP) site-terminated flap. Acts as a genome stabilization factor that prevents flaps from equilibrating into structures that lead to duplications and deletions. Also possesses 5'-3' exonuclease activity on nicked or gapped double-stranded DNA, and exhibits RNase H activity. Also involved in replication and repair of rDNA and in repairing mitochondrial DNA. The polypeptide is Flap endonuclease 1-B (Laccaria bicolor (strain S238N-H82 / ATCC MYA-4686) (Bicoloured deceiver)).